Reading from the N-terminus, the 380-residue chain is 8-amino-7-oxononanoate synthase (380 aa).

R26 serves as a coordination point for substrate. 104-105 (GY) is a binding site for pyridoxal 5'-phosphate. A substrate-binding site is contributed by H129. Residues S175, 200–203 (DEAH), and 232–235 (TLSK) contribute to the pyridoxal 5'-phosphate site. K235 is modified (N6-(pyridoxal phosphate)lysine). T345 provides a ligand contact to substrate.

This sequence belongs to the class-II pyridoxal-phosphate-dependent aminotransferase family. BioF subfamily. In terms of assembly, homodimer. Requires pyridoxal 5'-phosphate as cofactor.

The catalysed reaction is 6-carboxyhexanoyl-[ACP] + L-alanine + H(+) = (8S)-8-amino-7-oxononanoate + holo-[ACP] + CO2. Its pathway is cofactor biosynthesis; biotin biosynthesis. In terms of biological role, catalyzes the decarboxylative condensation of pimeloyl-[acyl-carrier protein] and L-alanine to produce 8-amino-7-oxononanoate (AON), [acyl-carrier protein], and carbon dioxide. The protein is 8-amino-7-oxononanoate synthase of Mycolicibacterium gilvum (strain PYR-GCK) (Mycobacterium gilvum (strain PYR-GCK)).